The chain runs to 443 residues: UDP-N-acetylmuramate--L-alanine ligase (443 aa).

Residue 111–117 (GAHGKTS) participates in ATP binding.

It belongs to the MurCDEF family.

It localises to the cytoplasm. The catalysed reaction is UDP-N-acetyl-alpha-D-muramate + L-alanine + ATP = UDP-N-acetyl-alpha-D-muramoyl-L-alanine + ADP + phosphate + H(+). Its pathway is cell wall biogenesis; peptidoglycan biosynthesis. In terms of biological role, cell wall formation. The polypeptide is UDP-N-acetylmuramate--L-alanine ligase (Ligilactobacillus salivarius (strain UCC118) (Lactobacillus salivarius)).